The following is a 155-amino-acid chain: MRKLVGGKLHGIRVTESNLEYHGSITLDPAHCEAAGILPLEFVEIWNKNSGARITTYVILGQRGSRCCVLNGAAARTCQPGDELIICSSVYLDGAEITNLSPAVLTFDANNNIVERLHYSVTRDGAGHYQFGIVAEDGEILQPPLKSGMRQKRAS.

The active-site Schiff-base intermediate with substrate; via pyruvic acid is serine 24. Serine 24 is subject to Pyruvic acid (Ser). Threonine 56 contributes to the substrate binding site. Tyrosine 57 acts as the Proton donor in catalysis. 72–74 lines the substrate pocket; it reads GAA.

Belongs to the PanD family. Heterooctamer of four alpha and four beta subunits. The cofactor is pyruvate. Post-translationally, is synthesized initially as an inactive proenzyme, which is activated by self-cleavage at a specific serine bond to produce a beta-subunit with a hydroxyl group at its C-terminus and an alpha-subunit with a pyruvoyl group at its N-terminus.

Its subcellular location is the cytoplasm. The catalysed reaction is L-aspartate + H(+) = beta-alanine + CO2. It functions in the pathway cofactor biosynthesis; (R)-pantothenate biosynthesis; beta-alanine from L-aspartate: step 1/1. Its function is as follows. Catalyzes the pyruvoyl-dependent decarboxylation of aspartate to produce beta-alanine. The chain is Aspartate 1-decarboxylase from Methylocella silvestris (strain DSM 15510 / CIP 108128 / LMG 27833 / NCIMB 13906 / BL2).